We begin with the raw amino-acid sequence, 356 residues long: Guanine nucleotide-binding protein alpha-15 subunit (356 aa).

Gly2 carries the N-myristoyl glycine lipid modification. Residue Cys5 is the site of S-palmitoyl cysteine attachment. One can recognise a G-alpha domain in the interval 33–356 (GNQKLLLLGT…GRNLRGTGME (324 aa)). Positions 36–49 (KLLLLGTGECGKST) are G1 motif. Residues 41–48 (GTGECGKS), 177–183 (LRIRIPT), 202–206 (DVGGQ), 271–274 (NKRD), and Ala328 contribute to the GTP site. 2 residues coordinate Mg(2+): Ser48 and Thr183. Residues 175 to 183 (DMLRIRIPT) form a G2 motif region. The interval 198–207 (FRIYDVGGQR) is G3 motif. The segment at 267–274 (ILFLNKRD) is G4 motif. Positions 326-331 (TCATDT) are G5 motif.

This sequence belongs to the G-alpha family. As to quaternary structure, g proteins are composed of 3 units; alpha, beta and gamma. The alpha chain contains the guanine nucleotide binding site.

Its function is as follows. Guanine nucleotide-binding proteins (G proteins) are involved as modulators or transducers in various transmembrane signaling systems. The sequence is that of Guanine nucleotide-binding protein alpha-15 subunit (gpa-15) from Caenorhabditis elegans.